The following is a 591-amino-acid chain: V-type ATP synthase alpha chain (591 aa).

An ATP-binding site is contributed by 233-240 (GPFGAGKT).

This sequence belongs to the ATPase alpha/beta chains family.

The catalysed reaction is ATP + H2O + 4 H(+)(in) = ADP + phosphate + 5 H(+)(out). Functionally, produces ATP from ADP in the presence of a proton gradient across the membrane. The V-type alpha chain is a catalytic subunit. This is V-type ATP synthase alpha chain from Streptococcus pyogenes serotype M2 (strain MGAS10270).